The primary structure comprises 566 residues: Membrane protein insertase YidC (566 aa).

5 consecutive transmembrane segments (helical) span residues 3–23 (IKRI…FNAW), 346–366 (GWLW…HAVV), 369–389 (WGWS…WFSA), 436–456 (GGCL…YVII), and 509–529 (MWIL…GLVL).

It belongs to the OXA1/ALB3/YidC family. Type 1 subfamily. Interacts with the Sec translocase complex via SecD. Specifically interacts with transmembrane segments of nascent integral membrane proteins during membrane integration.

Its subcellular location is the cell inner membrane. Functionally, required for the insertion and/or proper folding and/or complex formation of integral membrane proteins into the membrane. Involved in integration of membrane proteins that insert both dependently and independently of the Sec translocase complex, as well as at least some lipoproteins. Aids folding of multispanning membrane proteins. The protein is Membrane protein insertase YidC of Coxiella burnetii (strain Dugway 5J108-111).